The following is a 405-amino-acid chain: Histidine decarboxylase (405 aa).

Histidine 121 contacts substrate. Lysine 234 is subject to N6-(pyridoxal phosphate)lysine.

Belongs to the group II decarboxylase family. Homotetramer. It depends on pyridoxal 5'-phosphate as a cofactor.

It catalyses the reaction L-histidine + H(+) = histamine + CO2. Its pathway is siderophore biosynthesis; pseudomonine biosynthesis. The polypeptide is Histidine decarboxylase (Pseudomonas fluorescens).